Consider the following 604-residue polypeptide: Polycomb group protein EMF2B (604 aa).

The C2H2-type zinc-finger motif lies at 310 to 331 (CPFCLVPCGSFKGLGCHLNASH). Positions 396–440 (PHIVDSGSPEDAQAGSEDDYVQRENGSSVAHASVDPANSLHGSNL) are disordered. The interval 454–589 (LSVERADPRN…DARAMNACNT (136 aa)) is VEFS-box.

This sequence belongs to the VEFS (VRN2-EMF2-FIS2-SU(Z)12) family. As to quaternary structure, component of the polycomb repressive complex 2 (PRC2), composed of the core PRC2 components FIE2, EZ1 and CLF. PRC2 methylates 'Lys-27' residues of histone H3 (H3K27me3), leading to transcriptional repression of the affected target gene. As to expression, widely expressed.

Functionally, polycomb group (PcG) protein. PcG proteins act by forming multiprotein complexes, which are required to maintain the transcriptionally repressive state of homeotic genes throughout development. PcG proteins are not required to initiate repression, but to maintain it during later stages of development. They act via the methylation of histones, rendering chromatin heritably changed in its expressibility. Polycomb group (PcG) protein involved in the repression of flowering under long day (LD) conditions. Regulates floret development. The polypeptide is Polycomb group protein EMF2B (Oryza sativa subsp. japonica (Rice)).